A 378-amino-acid chain; its full sequence is Ribosomal RNA large subunit methyltransferase G (378 aa).

This sequence belongs to the methyltransferase superfamily. RlmG family.

It localises to the cytoplasm. It carries out the reaction guanosine(1835) in 23S rRNA + S-adenosyl-L-methionine = N(2)-methylguanosine(1835) in 23S rRNA + S-adenosyl-L-homocysteine + H(+). Functionally, specifically methylates the guanine in position 1835 (m2G1835) of 23S rRNA. The polypeptide is Ribosomal RNA large subunit methyltransferase G (Citrobacter koseri (strain ATCC BAA-895 / CDC 4225-83 / SGSC4696)).